Here is a 435-residue protein sequence, read N- to C-terminus: uncharacterized protein (435 aa).

The F-box domain maps to 7–58; the sequence is PFPITKLPLVPRCKILKFFDYGDLLDISLCSKRMAQTVRDIHITADLHYLTL.

This is an uncharacterized protein from Caenorhabditis elegans.